Here is a 198-residue protein sequence, read N- to C-terminus: MORN repeat-containing protein 4 homolog (198 aa).

The residue at position 2 (Ala2) is an N-acetylalanine. Positions 23–45 are enriched in low complexity; the sequence is QHQQHPHQQGQHGHHQQGQGQSQ. A disordered region spans residues 23 to 46; it reads QHQQHPHQQGQHGHHQQGQGQSQY. MORN repeat units lie at residues 64–87, 88–109, 111–132, and 134–153; these read YIGE…DGTR, YDGQ…ADGA, YEGE…ADGM, and YEGE…TFQD.

As to quaternary structure, interacts with ninaC. Phosphorylated under dark conditions and is dephosphorylated by light exposure. Retina. Expressed primarily in the phototransducing compartment of photoreceptor cells, the rhabdomeres and its expression is dependent on ninaC protein (at protein level).

It localises to the membrane. Its subcellular location is the cell projection. It is found in the rhabdomere membrane. Functionally, plays a role in promoting axonal degeneration following neuronal injury by toxic insult or trauma. Organizes rhabdomeric components to suppress random activation of the phototransduction cascade and thus increases the signaling fidelity of dark-adapted photoreceptors. The rtp/ninaC complex is required for stability of inad and inac and the normal termination of phototransduction in the retina. This is MORN repeat-containing protein 4 homolog from Drosophila melanogaster (Fruit fly).